A 637-amino-acid polypeptide reads, in one-letter code: Chaperone protein DnaK (637 aa).

Threonine 203 bears the Phosphothreonine; by autocatalysis mark. The tract at residues serine 600–valine 637 is disordered. A compositionally biased stretch (low complexity) spans glycine 604–glutamate 616. The segment covering alanine 619–valine 637 has biased composition (basic and acidic residues).

Belongs to the heat shock protein 70 family.

Its function is as follows. Acts as a chaperone. This chain is Chaperone protein DnaK, found in Dehalococcoides mccartyi (strain ATCC BAA-2266 / KCTC 15142 / 195) (Dehalococcoides ethenogenes (strain 195)).